Consider the following 325-residue polypeptide: MAEYQNIFTRVQVAGPAHMGVPLPEQDSPRTGKKPWQIHLLGRLGMAQIGPIYLGPLGILSIVFGSLAIMIIGFNMLASVGWNPIEFFRQFFWLALEPPSPKYGLKLPPLNDGGWWLMAGLFLTISILLWWVRMYTRARALGMGTHVAWAFAAAIWLYLVLGFIRPVLMGSWSEAVPFGIFPHLDWTAAFSLRYGNLFYNPFHALSIAFLYGATLLFAMHGATILAVSRFGGERELEQIADRGTASERAQLFWRWTMGFNATTESIHRWAWWFAVLCPLCGGIGILLSGTVVDNWYLWAVKHGVAPSYPAVFAPTIDPATLQGVK.

The next 3 helical transmembrane spans lie at leucine 54 to valine 80, asparagine 111 to alanine 140, and methionine 143 to leucine 168. (7R,8Z)-bacteriochlorophyll b is bound by residues histidine 183 and histidine 203. A helical transmembrane segment spans residues phenylalanine 198–alanine 226. The Fe cation site is built by histidine 220 and glutamate 235. Position 253 (tryptophan 253) interacts with a ubiquinone. Residues asparagine 260–leucine 286 traverse the membrane as a helical segment. Residue histidine 267 coordinates Fe cation.

Belongs to the reaction center PufL/M/PsbA/D family. Reaction center is composed of four bacteriochlorophylls, two bacteriopheophytins, two ubiquinones, one iron, and three highly hydrophobic polypeptide chains (designated L, M, and H).

The protein resides in the cell inner membrane. The reaction center is a membrane-bound complex that mediates the initial photochemical event in the electron transfer process of photosynthesis. The protein is Reaction center protein M chain (pufM) of Rubrivivax gelatinosus (strain NBRC 100245 / IL144).